Here is a 325-residue protein sequence, read N- to C-terminus: DNA-directed RNA polymerase subunit alpha (325 aa).

The tract at residues 1-231 (MQTSLLKPKI…DQLSVFAALE (231 aa)) is alpha N-terminal domain (alpha-NTD). Residues 246-325 (IDPILLRPVD…ENWPPAGLDK (80 aa)) are alpha C-terminal domain (alpha-CTD).

This sequence belongs to the RNA polymerase alpha chain family. In terms of assembly, homodimer. The RNAP catalytic core consists of 2 alpha, 1 beta, 1 beta' and 1 omega subunit. When a sigma factor is associated with the core the holoenzyme is formed, which can initiate transcription.

It carries out the reaction RNA(n) + a ribonucleoside 5'-triphosphate = RNA(n+1) + diphosphate. In terms of biological role, DNA-dependent RNA polymerase catalyzes the transcription of DNA into RNA using the four ribonucleoside triphosphates as substrates. This is DNA-directed RNA polymerase subunit alpha from Burkholderia thailandensis (strain ATCC 700388 / DSM 13276 / CCUG 48851 / CIP 106301 / E264).